We begin with the raw amino-acid sequence, 149 residues long: Ribosome-binding factor A (149 aa).

The span at 116–125 (TLFEELHPNP) shows a compositional bias: basic and acidic residues. Residues 116 to 149 (TLFEELHPNPEEDDGDTDAETLLEDSESGIERET) form a disordered region. The span at 126–143 (EEDDGDTDAETLLEDSES) shows a compositional bias: acidic residues.

The protein belongs to the RbfA family. In terms of assembly, monomer. Binds 30S ribosomal subunits, but not 50S ribosomal subunits or 70S ribosomes.

The protein localises to the cytoplasm. Functionally, one of several proteins that assist in the late maturation steps of the functional core of the 30S ribosomal subunit. Associates with free 30S ribosomal subunits (but not with 30S subunits that are part of 70S ribosomes or polysomes). Required for efficient processing of 16S rRNA. May interact with the 5'-terminal helix region of 16S rRNA. The chain is Ribosome-binding factor A from Leptospira biflexa serovar Patoc (strain Patoc 1 / Ames).